Consider the following 1408-residue polypeptide: Palladin (1408 aa).

Residues 69–229 form a disordered region; the sequence is SKSPISLCET…SASQSPTADQ (161 aa). Composition is skewed to polar residues over residues 149-169 and 193-229; these read PNPS…QSQL and RSPN…TADQ. Ser194 bears the Phosphoserine mark. Ig-like C2-type domains lie at 278 to 367 and 448 to 546; these read PRFI…AEVF and PVFT…LVIT. 2 disulfide bridges follow: Cys299-Cys351 and Cys469-Cys528. An interaction with VASP region spans residues 569–573; it reads FPPPP. Disordered stretches follow at residues 631–660 and 687–727; these read NGKA…LAKP and PPGV…VPSE. The residue at position 639 (Ser639) is a Phosphoserine. Thr642 carries the post-translational modification Phosphothreonine. Ser648 carries the phosphoserine modification. An interaction with LASP1 region spans residues 653–683; that stretch reads PPPLLAKPKLDPLKLQQLQNQVRLEQEACAW. Residues 683-713 form an interaction with SORBS2, SPIN90 and SRC region; the sequence is WPPAPPGVPCNSSSSGSSAPPSPPFPPPPPA. The span at 691-701 shows a compositional bias: low complexity; sequence PCNSSSSGSSA. Phosphoserine occurs at positions 700, 704, and 744. The segment covering 702–714 has biased composition (pro residues); it reads PPSPPFPPPPPAF. 3 disordered regions span residues 758-854, 882-904, and 960-981; these read NLGP…RFGP, KGVT…SDEE, and ETAA…LDGQ. Residues 765–779 are compositionally biased toward low complexity; that stretch reads LPTPTSSPSSSSLPS. Pro residues-rich tracts occupy residues 780–797, 807–818, and 828–840; these read PLSP…PPFV, SPSPPPPPPPVF, and DVFP…PPLP. Residues 782-842 are interaction with EPS8; that stretch reads SPTPRPFGRA…PPPPPPLPSS (61 aa). The tract at residues 807–842 is interaction with SORBS2, SPIN90, SRC and PFN1; that stretch reads SPSPPPPPPPVFSPSAAYPVPDVFPLPPPPPPLPSS. The interval 830–834 is interaction with VASP; that stretch reads FPLPP. Phosphoserine is present on Ser901. 2 positions are modified to phosphoserine: Ser1004 and Ser1009. Positions 1026 to 1110 constitute an Ig-like C2-type 3 domain; the sequence is PFFEMKLKHY…MAANPQGRVS (85 aa). The interval 1121-1150 is disordered; sequence NQRGRSPRSPSGHPHARRPRSRSRDSGDEN. Residues 1123 to 1133 show a composition bias toward low complexity; the sequence is RGRSPRSPSGH. Phosphoserine is present on residues Ser1126, Ser1129, Ser1131, and Ser1141. Ser1143 bears the Phosphoserine; by PKB/AKT1 mark. Ser1146 bears the Phosphoserine mark. 2 consecutive Ig-like C2-type domains span residues 1160–1251 and 1259–1349; these read PHFL…LVVA and PVFM…ARLD. 2 interaction with EZR regions span residues 1162-1251 and 1261-1351; these read FLQA…LVVA and FMEK…LDVY. Cys1181 and Cys1233 are oxidised to a cystine. Ser1377 carries the post-translational modification Phosphoserine.

This sequence belongs to the myotilin/palladin family. Interacts with EPS8. Interacts with LASP1. Interacts with VASP. Interacts with ACTN. Interacts with SORBS2. Interacts with PFN1. Interacts with LPP. Interacts with SPIN90. Interacts with SRC. Interacts with EZR. Interacts with RAI14. Phosphorylated predominantly on serines and, to a lesser extent, on tyrosines. Phosphorylation at Ser-1143 by PKB/AKT1 modulates cytoskeletal organization and cell motility. As to expression, detected in both muscle and non-muscle tissues and cells (at protein level). Isoform 3 is widely expressed, isoform 4 is particularly abundant in tissues rich in smooth muscle and in the cardiac muscle and isoform 1 is detected in heart.

Its subcellular location is the cytoplasm. The protein localises to the cytoskeleton. The protein resides in the cell junction. It localises to the focal adhesion. It is found in the myofibril. Its subcellular location is the sarcomere. The protein localises to the z line. The protein resides in the cell projection. It localises to the ruffle. It is found in the podosome. Its subcellular location is the lamellipodium. The protein localises to the axon. The protein resides in the growth cone. Cytoskeletal protein required for organization of normal actin cytoskeleton. Roles in establishing cell morphology, motility, cell adhesion and cell-extracellular matrix interactions in a variety of cell types. May function as a scaffolding molecule with the potential to influence both actin polymerization and the assembly of existing actin filaments into higher-order arrays. Binds to proteins that bind to either monomeric or filamentous actin. Localizes at sites where active actin remodeling takes place, such as lamellipodia and membrane ruffles. Different isoforms may have functional differences. Involved in the control of morphological and cytoskeletal changes associated with dendritic cell maturation. Involved in targeting ACTN to specific subcellular locations. May be required for the initiation of neural tube closure. The protein is Palladin (Palld) of Mus musculus (Mouse).